Consider the following 868-residue polypeptide: Probable beta-glucosidase F (868 aa).

The signal sequence occupies residues 1–20; it reads MAHRWLILALVAAAAPRALA. The interval 21-40 is disordered; that stretch reads SPGPSLNERQSDDEPFSPPY. N-linked (GlcNAc...) asparagine glycosylation is found at asparagine 65, asparagine 73, and asparagine 257. The active site involves aspartate 285. 5 N-linked (GlcNAc...) asparagine glycosylation sites follow: asparagine 328, asparagine 360, asparagine 395, asparagine 421, and asparagine 726. A disordered region spans residues 731 to 752; the sequence is YPYPDGYSTDPQPPPRAGGAEG.

The protein belongs to the glycosyl hydrolase 3 family.

It is found in the secreted. The enzyme catalyses Hydrolysis of terminal, non-reducing beta-D-glucosyl residues with release of beta-D-glucose.. Its pathway is glycan metabolism; cellulose degradation. Its function is as follows. Beta-glucosidases are one of a number of cellulolytic enzymes involved in the degradation of cellulosic biomass. Catalyzes the last step releasing glucose from the inhibitory cellobiose. The protein is Probable beta-glucosidase F (bglF) of Emericella nidulans (strain FGSC A4 / ATCC 38163 / CBS 112.46 / NRRL 194 / M139) (Aspergillus nidulans).